A 311-amino-acid polypeptide reads, in one-letter code: Ribonuclease Z (311 aa).

Zn(2+) is bound by residues His61, His63, Asp65, His66, His139, Asp210, and His268. Asp65 functions as the Proton acceptor in the catalytic mechanism.

Belongs to the RNase Z family. As to quaternary structure, homodimer. It depends on Zn(2+) as a cofactor.

It catalyses the reaction Endonucleolytic cleavage of RNA, removing extra 3' nucleotides from tRNA precursor, generating 3' termini of tRNAs. A 3'-hydroxy group is left at the tRNA terminus and a 5'-phosphoryl group is left at the trailer molecule.. In terms of biological role, zinc phosphodiesterase, which displays some tRNA 3'-processing endonuclease activity. Probably involved in tRNA maturation, by removing a 3'-trailer from precursor tRNA. The sequence is that of Ribonuclease Z from Haloarcula marismortui (strain ATCC 43049 / DSM 3752 / JCM 8966 / VKM B-1809) (Halobacterium marismortui).